We begin with the raw amino-acid sequence, 735 residues long: Muskelin (735 aa).

Residue A2 is modified to N-acetylalanine. Positions 172–204 (REQEAIRLCLKHFRQHNYTEAFESLQKKTKIAL) constitute a LisH domain. In terms of domain architecture, CTLH spans 206-258 (HPMLTDIHDKLVLKGDFDACEELIEKAVNDGLFNQYISQQEYKPRWSQIIPKS). Kelch repeat units follow at residues 284 to 330 (TVYL…SCHK), 339 to 391 (QIYT…FDHQ), 408 to 458 (ILTC…SRIG), 469 to 515 (CLYV…TGFT), 526 to 578 (EIHV…SLQE), and 597 to 651 (VHYL…AQVD).

In terms of assembly, homodimer; may form higher oligomers. Identified in the CTLH complex that contains GID4, RANBP9 and/or RANBP10, MKLN1, MAEA, RMND5A (or alternatively its paralog RMND5B), GID8, ARMC8, WDR26 and YPEL5. Within this complex, MAEA, RMND5A (or alternatively its paralog RMND5B), GID8, WDR26, and RANBP9 and/or RANBP10 form the catalytic core, while GID4, MKLN1, ARMC8 and YPEL5 have ancillary roles. Interacts with RANBP9. Part of a complex consisting of RANBP9, MKLN1 and GID8. Interacts with GABRA1. Interacts with the C-terminal tail of PTGER3.

It localises to the cytoplasm. Its subcellular location is the cytosol. The protein localises to the nucleus. The protein resides in the nucleoplasm. It is found in the cell projection. It localises to the ruffle. Its subcellular location is the cell cortex. The protein localises to the synapse. The protein resides in the postsynapse. Its function is as follows. Component of the CTLH E3 ubiquitin-protein ligase complex that selectively accepts ubiquitin from UBE2H and mediates ubiquitination and subsequent proteasomal degradation of the transcription factor HBP1. Required for internalization of the GABA receptor GABRA1 from the cell membrane via endosomes and subsequent GABRA1 degradation. Acts as a mediator of cell spreading and cytoskeletal responses to the extracellular matrix component THBS1. This Homo sapiens (Human) protein is Muskelin (MKLN1).